A 527-amino-acid chain; its full sequence is Peptide chain release factor 3 (527 aa).

The region spanning 11 to 278 is the tr-type G domain; it reads AKRRTFAIIS…GFVEWAPAPL (268 aa). GTP contacts are provided by residues 20–27, 87–91, and 141–144; these read SHPDAGKT, DTPGH, and NKMD.

The protein belongs to the TRAFAC class translation factor GTPase superfamily. Classic translation factor GTPase family. PrfC subfamily.

The protein localises to the cytoplasm. Functionally, increases the formation of ribosomal termination complexes and stimulates activities of RF-1 and RF-2. It binds guanine nucleotides and has strong preference for UGA stop codons. It may interact directly with the ribosome. The stimulation of RF-1 and RF-2 is significantly reduced by GTP and GDP, but not by GMP. The polypeptide is Peptide chain release factor 3 (Teredinibacter turnerae (strain ATCC 39867 / T7901)).